The chain runs to 910 residues: Disease resistance protein RPH8A (910 aa).

Positions 15 to 57 form a coiled coil; the sequence is DLLSRESERLQGIDEQLDGLKRQLRSLQSLLKDADAKKHGSDR. The NB-ARC domain maps to 146 to 459; that stretch reads RQRVQREIRQ…AEGIYDGSTI (314 aa). ATP is bound at residue 192-199; that stretch reads GMGGIGKT.

The protein belongs to the disease resistance NB-LRR family. RPP8/HRT subfamily.

Disease resistance protein. Resistance proteins guard the plant against pathogens that contain an appropriate avirulence protein via an indirect interaction with this avirulence protein. That triggers a defense system including the hypersensitive response, which restricts the pathogen growth. In contrast to RPP8, it does not specifically recognize the Emco5 avirulence protein from Hyaloperonospora parasitica. The chain is Disease resistance protein RPH8A (RPH8A) from Arabidopsis thaliana (Mouse-ear cress).